The following is a 153-amino-acid chain: MAPKAEKKPAAKKPAEEEPAAEKAEKAPAGKKPKAEKRLPAGKGEKGSGEGKKAGRKKAKKSVETYKIYIFKVLKQVHPDIGISSKAMSIMNSFINDIFEKLAGESAKLARYNKKPTITSREIQTAVRLVLPGELAKHAVSEGTKAVTKFTSS.

Basic and acidic residues-rich tracts occupy residues 1–28 (MAPK…EKAP) and 36–53 (EKRL…EGKK). The interval 1-61 (MAPKAEKKPA…KKAGRKKAKK (61 aa)) is disordered. Residues lysine 7 and lysine 37 each carry the N6-acetyllysine modification. A Glycyl lysine isopeptide (Lys-Gly) (interchain with G-Cter in ubiquitin) cross-link involves residue lysine 149.

It belongs to the histone H2B family. As to quaternary structure, the nucleosome is a histone octamer containing two molecules each of H2A, H2B, H3 and H4 assembled in one H3-H4 heterotetramer and two H2A-H2B heterodimers. The octamer wraps approximately 147 bp of DNA. In terms of processing, can be acetylated to form H2BK6ac and H2BK33ac. Post-translationally, monoubiquitinated by BRE1 to form H2BK143ub1 and deubiquitinated by UBP26. Required for heterochromatic histone H3 di- and trimethylation at H3K4me. May give a specific tag for epigenetic transcriptional activation.

Its subcellular location is the nucleus. The protein resides in the chromosome. Functionally, core component of nucleosome. Nucleosomes wrap and compact DNA into chromatin, limiting DNA accessibility to the cellular machineries which require DNA as a template. Histones thereby play a central role in transcription regulation, DNA repair, DNA replication and chromosomal stability. DNA accessibility is regulated via a complex set of post-translational modifications of histones, also called histone code, and nucleosome remodeling. In Oryza sativa subsp. indica (Rice), this protein is Histone H2B.8 (H2B.8).